A 471-amino-acid chain; its full sequence is 3-isopropylmalate dehydratase large subunit (471 aa).

Cysteine 349, cysteine 409, and cysteine 412 together coordinate [4Fe-4S] cluster.

It belongs to the aconitase/IPM isomerase family. LeuC type 1 subfamily. Heterodimer of LeuC and LeuD. [4Fe-4S] cluster serves as cofactor.

It catalyses the reaction (2R,3S)-3-isopropylmalate = (2S)-2-isopropylmalate. Its pathway is amino-acid biosynthesis; L-leucine biosynthesis; L-leucine from 3-methyl-2-oxobutanoate: step 2/4. Functionally, catalyzes the isomerization between 2-isopropylmalate and 3-isopropylmalate, via the formation of 2-isopropylmaleate. The protein is 3-isopropylmalate dehydratase large subunit of Aliivibrio fischeri (strain MJ11) (Vibrio fischeri).